A 156-amino-acid polypeptide reads, in one-letter code: Small ribosomal subunit protein uS7 (156 aa).

It belongs to the universal ribosomal protein uS7 family. Part of the 30S ribosomal subunit. Contacts proteins S9 and S11.

One of the primary rRNA binding proteins, it binds directly to 16S rRNA where it nucleates assembly of the head domain of the 30S subunit. Is located at the subunit interface close to the decoding center, probably blocks exit of the E-site tRNA. The chain is Small ribosomal subunit protein uS7 from Colwellia psychrerythraea (strain 34H / ATCC BAA-681) (Vibrio psychroerythus).